A 345-amino-acid chain; its full sequence is Anthranilate phosphoribosyltransferase (345 aa).

Residues G86, 89 to 90 (GD), T94, 96 to 99 (NIST), 114 to 122 (KHGGRGVSS), and S126 each bind 5-phospho-alpha-D-ribose 1-diphosphate. G86 contributes to the anthranilate binding site. S98 provides a ligand contact to Mg(2+). R172 is a binding site for anthranilate. Mg(2+) is bound by residues D231 and E232.

Belongs to the anthranilate phosphoribosyltransferase family. As to quaternary structure, homodimer. Mg(2+) is required as a cofactor.

The catalysed reaction is N-(5-phospho-beta-D-ribosyl)anthranilate + diphosphate = 5-phospho-alpha-D-ribose 1-diphosphate + anthranilate. It functions in the pathway amino-acid biosynthesis; L-tryptophan biosynthesis; L-tryptophan from chorismate: step 2/5. Its function is as follows. Catalyzes the transfer of the phosphoribosyl group of 5-phosphorylribose-1-pyrophosphate (PRPP) to anthranilate to yield N-(5'-phosphoribosyl)-anthranilate (PRA). The sequence is that of Anthranilate phosphoribosyltransferase from Ralstonia pickettii (strain 12J).